The sequence spans 174 residues: Ribosome maturation factor RimM (174 aa).

Residues 97–171 (SDGEYYWCDL…RMTVSLPEGL (75 aa)) enclose the PRC barrel domain.

The protein belongs to the RimM family. Binds ribosomal protein uS19.

Its subcellular location is the cytoplasm. Its function is as follows. An accessory protein needed during the final step in the assembly of 30S ribosomal subunit, possibly for assembly of the head region. Essential for efficient processing of 16S rRNA. May be needed both before and after RbfA during the maturation of 16S rRNA. It has affinity for free ribosomal 30S subunits but not for 70S ribosomes. This Geotalea daltonii (strain DSM 22248 / JCM 15807 / FRC-32) (Geobacter daltonii) protein is Ribosome maturation factor RimM.